Consider the following 436-residue polypeptide: Enolase (436 aa).

Position 167 (Q167) interacts with (2R)-2-phosphoglycerate. E209 serves as the catalytic Proton donor. 3 residues coordinate Mg(2+): D246, E291, and D318. Residues K343, R372, S373, and K394 each contribute to the (2R)-2-phosphoglycerate site. The active-site Proton acceptor is K343.

Belongs to the enolase family. As to quaternary structure, component of the RNA degradosome, a multiprotein complex involved in RNA processing and mRNA degradation. It depends on Mg(2+) as a cofactor.

It localises to the cytoplasm. The protein localises to the secreted. Its subcellular location is the cell surface. It catalyses the reaction (2R)-2-phosphoglycerate = phosphoenolpyruvate + H2O. It functions in the pathway carbohydrate degradation; glycolysis; pyruvate from D-glyceraldehyde 3-phosphate: step 4/5. Its function is as follows. Catalyzes the reversible conversion of 2-phosphoglycerate (2-PG) into phosphoenolpyruvate (PEP). It is essential for the degradation of carbohydrates via glycolysis. The polypeptide is Enolase (Haemophilus influenzae (strain 86-028NP)).